Reading from the N-terminus, the 251-residue chain is Uridylate kinase (251 aa).

19–22 (KLSG) is an ATP binding site. Gly-61 is a binding site for UMP. ATP contacts are provided by Gly-62 and Arg-66. Residues Asp-81 and 142 to 149 (IGNPFFTT) each bind UMP. Residues Thr-169, Gln-170, Tyr-175, and Asp-178 each contribute to the ATP site.

It belongs to the UMP kinase family. In terms of assembly, homohexamer.

The protein localises to the cytoplasm. The catalysed reaction is UMP + ATP = UDP + ADP. The protein operates within pyrimidine metabolism; CTP biosynthesis via de novo pathway; UDP from UMP (UMPK route): step 1/1. Its activity is regulated as follows. Inhibited by UTP. Catalyzes the reversible phosphorylation of UMP to UDP. This Hyphomonas neptunium (strain ATCC 15444) protein is Uridylate kinase.